Consider the following 397-residue polypeptide: Putative 3'(2'),5'-bisphosphate nucleotidase, mitochondrial (397 aa).

A mitochondrion-targeting transit peptide spans 1 to 16; sequence MYILDTGARFSAVRFS. Catalysis depends on aspartate 91, which acts as the Proton acceptor. Mg(2+) contacts are provided by glutamate 114, aspartate 174, isoleucine 176, and aspartate 177. Threonine 179 serves as the catalytic Proton acceptor. The adenosine 3',5'-bisphosphate site is built by threonine 179, serine 305, lysine 308, and aspartate 334. Serine 305, lysine 308, and aspartate 334 together coordinate AMP. A Mg(2+)-binding site is contributed by aspartate 334.

The protein belongs to the inositol monophosphatase superfamily. It depends on Mg(2+) as a cofactor.

Its subcellular location is the mitochondrion. The enzyme catalyses 3'-phosphoadenylyl sulfate + H2O = adenosine 5'-phosphosulfate + phosphate. The catalysed reaction is adenosine 3',5'-bisphosphate + H2O = AMP + phosphate. It catalyses the reaction adenosine 2',5'-bisphosphate + H2O = AMP + phosphate. In terms of biological role, phosphatase that converts adenosine 3'-phosphate 5'-phosphosulfate (PAPS) to adenosine 5'-phosphosulfate (APS) and 3'(2')-phosphoadenosine 5'-phosphate (PAP) to AMP. This chain is Putative 3'(2'),5'-bisphosphate nucleotidase, mitochondrial, found in Arabidopsis thaliana (Mouse-ear cress).